We begin with the raw amino-acid sequence, 204 residues long: Recombination protein RecR (204 aa).

The C4-type zinc-finger motif lies at 57 to 72; sequence CPTCFNYTDTDICRYC. One can recognise a Toprim domain in the interval 80-181; the sequence is ESICVVEEPS…KLSRIAHGVP (102 aa).

The protein belongs to the RecR family.

May play a role in DNA repair. It seems to be involved in an RecBC-independent recombinational process of DNA repair. It may act with RecF and RecO. The chain is Recombination protein RecR from Bdellovibrio bacteriovorus (strain ATCC 15356 / DSM 50701 / NCIMB 9529 / HD100).